The chain runs to 876 residues: Alanine--tRNA ligase (876 aa).

Zn(2+)-binding residues include His-564, His-568, Cys-666, and His-670.

Belongs to the class-II aminoacyl-tRNA synthetase family. In terms of assembly, homotetramer. Zn(2+) serves as cofactor.

It localises to the cytoplasm. It catalyses the reaction tRNA(Ala) + L-alanine + ATP = L-alanyl-tRNA(Ala) + AMP + diphosphate. Functionally, catalyzes the attachment of alanine to tRNA(Ala) in a two-step reaction: alanine is first activated by ATP to form Ala-AMP and then transferred to the acceptor end of tRNA(Ala). Also edits incorrectly charged Ser-tRNA(Ala) and Gly-tRNA(Ala) via its editing domain. The sequence is that of Alanine--tRNA ligase from Salmonella typhimurium (strain LT2 / SGSC1412 / ATCC 700720).